The following is a 361-amino-acid chain: Peptide chain release factor 1 (361 aa).

Residue Q235 is modified to N5-methylglutamine.

Belongs to the prokaryotic/mitochondrial release factor family. Post-translationally, methylated by PrmC. Methylation increases the termination efficiency of RF1.

Its subcellular location is the cytoplasm. Peptide chain release factor 1 directs the termination of translation in response to the peptide chain termination codons UAG and UAA. The sequence is that of Peptide chain release factor 1 from Rhodopseudomonas palustris (strain ATCC BAA-98 / CGA009).